The sequence spans 212 residues: Large ribosomal subunit protein uL3 (212 aa).

Q153 carries the post-translational modification N5-methylglutamine.

Belongs to the universal ribosomal protein uL3 family. In terms of assembly, part of the 50S ribosomal subunit. Forms a cluster with proteins L14 and L19. Post-translationally, methylated by PrmB.

In terms of biological role, one of the primary rRNA binding proteins, it binds directly near the 3'-end of the 23S rRNA, where it nucleates assembly of the 50S subunit. The polypeptide is Large ribosomal subunit protein uL3 (Azoarcus sp. (strain BH72)).